Here is a 679-residue protein sequence, read N- to C-terminus: Glycine--tRNA ligase beta subunit (679 aa).

Belongs to the class-II aminoacyl-tRNA synthetase family. As to quaternary structure, tetramer of two alpha and two beta subunits.

The protein resides in the cytoplasm. It catalyses the reaction tRNA(Gly) + glycine + ATP = glycyl-tRNA(Gly) + AMP + diphosphate. This is Glycine--tRNA ligase beta subunit from Streptococcus pyogenes serotype M2 (strain MGAS10270).